The sequence spans 238 residues: Chloride intracellular channel exl-1 (238 aa).

It belongs to the chloride channel CLIC family. Expressed in the intestine, neurons and muscles.

The protein localises to the cytoplasm. It is found in the membrane. The protein resides in the lysosome membrane. Its subcellular location is the golgi apparatus membrane. Probable chloride channel. This chain is Chloride intracellular channel exl-1 (exl-1), found in Caenorhabditis elegans.